We begin with the raw amino-acid sequence, 373 residues long: Geraniol dehydrogenase (373 aa).

The Zn(2+) site is built by Cys47, His67, Cys96, Cys99, Cys102, Cys110, and Cys175.

This sequence belongs to the zinc-containing alcohol dehydrogenase family. Homodimer. The cofactor is Zn(2+).

The enzyme catalyses (2E)-geraniol + NAD(+) = (2E)-geranial + NADH + H(+). It catalyses the reaction perillyl alcohol + NAD(+) = perillyl aldehyde + NADH + H(+). The protein operates within terpene metabolism; monoterpene degradation. Its activity is regulated as follows. Is inhibited by EDTA, N-ethylmaleimide, diethylpyrocarbonate, and 1-cyclohexyl-N-(2-morpholinoethyl)carbodiimide in vitro. Involved in the degradation of the monoterpenes beta-myrcene and limonene. During anaerobic degradation of beta-myrcene, catalyzes the NAD(+)-dependent oxidation of geraniol to geranial. Can also catalyze the oxidation of (S)-perillyl alcohol to perillyl aldehyde, and to a lesser extent, the oxidation of nerol, citronellol, cumic alcohol, and benzyl alcohol. Cannot use NADP(+) instead of NAD(+) as cosubstrate. In Castellaniella defragrans (strain DSM 12143 / CCUG 39792 / 65Phen) (Alcaligenes defragrans), this protein is Geraniol dehydrogenase.